Here is a 91-residue protein sequence, read N- to C-terminus: Small ribosomal subunit protein bS20 (91 aa).

A disordered region spans residues Met-1–Leu-28. Positions Ala-7–Ser-23 are enriched in basic residues.

Belongs to the bacterial ribosomal protein bS20 family.

Functionally, binds directly to 16S ribosomal RNA. This is Small ribosomal subunit protein bS20 from Brevibacillus brevis (strain 47 / JCM 6285 / NBRC 100599).